A 486-amino-acid polypeptide reads, in one-letter code: Glutamyl-tRNA(Gln) amidotransferase subunit A (486 aa).

Active-site charge relay system residues include lysine 74 and serine 149. The active-site Acyl-ester intermediate is serine 173.

Belongs to the amidase family. GatA subfamily. As to quaternary structure, heterotrimer of A, B and C subunits.

It catalyses the reaction L-glutamyl-tRNA(Gln) + L-glutamine + ATP + H2O = L-glutaminyl-tRNA(Gln) + L-glutamate + ADP + phosphate + H(+). Functionally, allows the formation of correctly charged Gln-tRNA(Gln) through the transamidation of misacylated Glu-tRNA(Gln) in organisms which lack glutaminyl-tRNA synthetase. The reaction takes place in the presence of glutamine and ATP through an activated gamma-phospho-Glu-tRNA(Gln). The chain is Glutamyl-tRNA(Gln) amidotransferase subunit A from Prochlorococcus marinus (strain MIT 9313).